We begin with the raw amino-acid sequence, 105 residues long: Small ribosomal subunit protein uS10 (105 aa).

This sequence belongs to the universal ribosomal protein uS10 family. Part of the 30S ribosomal subunit.

In terms of biological role, involved in the binding of tRNA to the ribosomes. The protein is Small ribosomal subunit protein uS10 of Crocosphaera subtropica (strain ATCC 51142 / BH68) (Cyanothece sp. (strain ATCC 51142)).